A 133-amino-acid polypeptide reads, in one-letter code: Fatty acid-binding protein, heart (133 aa).

V2 is subject to N-acetylvaline. T8 carries the post-translational modification Phosphothreonine. Y20 is modified (phosphotyrosine; by Tyr-kinases). S23 carries the post-translational modification Phosphoserine. A Phosphothreonine modification is found at T30. The residue at position 83 (S83) is a Phosphoserine. Position 127–129 (127–129) interacts with (9Z)-octadecenoate; sequence RTY. 127–129 lines the hexadecanoate pocket; the sequence is RTY. 127-129 contacts octadecanoate; sequence RTY.

It belongs to the calycin superfamily. Fatty-acid binding protein (FABP) family.

Its subcellular location is the cytoplasm. Its function is as follows. FABPs are thought to play a role in the intracellular transport of long-chain fatty acids and their acyl-CoA esters. The chain is Fatty acid-binding protein, heart (FABP3) from Sus scrofa (Pig).